A 244-amino-acid polypeptide reads, in one-letter code: Protein crossbronx (244 aa).

A UBC core domain is found at 20–176 (QQEYKILAEY…VQKNIKESKD (157 aa)).

This sequence belongs to the ubiquitin-conjugating enzyme family. FTS subfamily.

This chain is Protein crossbronx (cbx), found in Drosophila yakuba (Fruit fly).